We begin with the raw amino-acid sequence, 84 residues long: Putative membrane protein insertion efficiency factor (84 aa).

Belongs to the UPF0161 family.

The protein resides in the cell inner membrane. Could be involved in insertion of integral membrane proteins into the membrane. This Acidiphilium cryptum (strain JF-5) protein is Putative membrane protein insertion efficiency factor.